The primary structure comprises 236 residues: Uridylate kinase (236 aa).

10–13 (KLSG) contacts ATP. Residue Gly52 coordinates UMP. ATP is bound by residues Gly53 and Arg57. UMP-binding positions include Asp72 and 133-140 (TGNPFFTT). 3 residues coordinate ATP: Thr160, Tyr166, and Asp169.

The protein belongs to the UMP kinase family. As to quaternary structure, homohexamer.

It is found in the cytoplasm. The catalysed reaction is UMP + ATP = UDP + ADP. The protein operates within pyrimidine metabolism; CTP biosynthesis via de novo pathway; UDP from UMP (UMPK route): step 1/1. With respect to regulation, inhibited by UTP. In terms of biological role, catalyzes the reversible phosphorylation of UMP to UDP. This is Uridylate kinase from Bacteroides thetaiotaomicron (strain ATCC 29148 / DSM 2079 / JCM 5827 / CCUG 10774 / NCTC 10582 / VPI-5482 / E50).